The primary structure comprises 188 residues: GMP synthase [glutamine-hydrolyzing] subunit A (188 aa).

A Glutamine amidotransferase type-1 domain is found at 1–188; sequence MIVILDNGGQ…FCKVCGYKFE (188 aa). Cys76 (nucleophile) is an active-site residue. Active-site residues include His163 and Glu165.

Heterodimer composed of a glutamine amidotransferase subunit (A) and a GMP-binding subunit (B).

It catalyses the reaction XMP + L-glutamine + ATP + H2O = GMP + L-glutamate + AMP + diphosphate + 2 H(+). The protein operates within purine metabolism; GMP biosynthesis; GMP from XMP (L-Gln route): step 1/1. Functionally, catalyzes the synthesis of GMP from XMP. In Methanocaldococcus jannaschii (strain ATCC 43067 / DSM 2661 / JAL-1 / JCM 10045 / NBRC 100440) (Methanococcus jannaschii), this protein is GMP synthase [glutamine-hydrolyzing] subunit A.